The chain runs to 68 residues: UPF0253 protein VF_0662 (68 aa).

The protein belongs to the UPF0253 family.

The protein is UPF0253 protein VF_0662 of Aliivibrio fischeri (strain ATCC 700601 / ES114) (Vibrio fischeri).